The following is a 377-amino-acid chain: MANSANTNTVPKLYRSVIEDVINDVRDIFLDDGVDEQVLMELKTLWENKLMQSRAVDGFHSEEQQLLLQVQQQHQPQQQQHHHHHHHQQAQPQQTVPQQAQTQQVLIPASQQATAPQVIVPDSKLIQHMNASSITSAAATAATLALPAGVTPVQQILTNSGQLLQVVRAANGAQYIFQPQQSVVLQQQVIPQMQPGGVQAPVIQQVLAPLPGGISPQTGVIIQPQQILFTGNKTQVIPTTVAAPTPAQAQIPAAGQQQPQAQPAQQQAPLVLQVDGTGDTSSEEDEDEEEDYDDDEEEDKEKDGAEDGQVEEEPLNSEDDVSDEEGQELFDTENVVVCQYDKIHRSKNKWKFHLKDGIMNLNGRDYIFSKAIGDAEW.

Position 2 is an N-acetylalanine (A2). 3 stretches are compositionally biased toward low complexity: residues 69-79, 89-105, and 248-280; these read QVQQQHQPQQQ, QAQPQQTVPQQAQTQQV, and QAQIPAAGQQQPQAQPAQQQAPLVLQVDGTGDT. Disordered stretches follow at residues 69 to 107 and 248 to 330; these read QVQQQHQPQQQQHHHHHHHQQAQPQQTVPQQAQTQQVLI and QAQI…QELF. A phosphoserine; by TAF1 mark is found at S281 and S282. Residues 281–330 show a composition bias toward acidic residues; sequence SSEEDEDEEEDYDDDEEEDKEKDGAEDGQVEEEPLNSEDDVSDEEGQELF. Phosphoserine is present on residues S317 and S322. DNA contacts are provided by H344 and R345.

The protein belongs to the TFIIA subunit 1 family. TFIIA is a heterodimer of the large unprocessed subunit 1 and a small subunit gamma. It was originally believed to be a heterotrimer of an alpha (p35), a beta (p19) and a gamma subunit (p12). TFIIA forms a complex with TBP. Part of TBP-based Pol II pre-initiation complex (PIC), in which Pol II core assembles with general transcription factors and other specific initiation factors including GTF2E1, GTF2E2, GTF2F1, GTF2F2, TCEA1, ERCC2, ERCC3, GTF2H2, GTF2H3, GTF2H4, GTF2H5, GTF2A1, GTF2A2, GTF2B and TBP; this large multi-subunit PIC complex mediates DNA unwinding and targets Pol II core to the transcription start site where the first phosphodiester bond forms. The alpha and beta subunits are postranslationally produced from the precursor formby TASP1. The cleavage promotes proteasomal degradation.

The protein localises to the nucleus. Functionally, TFIIA is a component of the transcription machinery of RNA polymerase II and plays an important role in transcriptional activation. TFIIA in a complex with TBP mediates transcriptional activity. The protein is Transcription initiation factor IIA subunit 1 (Gtf2a1) of Rattus norvegicus (Rat).